We begin with the raw amino-acid sequence, 497 residues long: Validamine 7-phosphate valienyltransferase (497 aa).

Aspartate 158 contacts GDP-valienol. Histidine 182 is a validamine 7-phosphate binding site. GDP-valienol is bound by residues arginine 290, lysine 295, arginine 321, 325-326 (NR), 361-362 (ND), and threonine 366. 383–386 (DGQN) is a validamine 7-phosphate binding site. GDP-valienol contacts are provided by residues 387–388 (LS) and glutamate 391.

This sequence belongs to the glycosyltransferase 20 family. In terms of assembly, homodimer.

The catalysed reaction is validamine 7-phosphate + GDP-valienol = validoxylamine A 7'-phosphate + GDP + H(+). Its function is as follows. Involved in the biosynthesis of the antifungal agent validamycin A. Catalyzes the condensation between GDP-valienol and validamine 7-phosphate via a nonglycosidic C-N bond formation to yield validoxylamine A 7'-phosphate. The protein is Validamine 7-phosphate valienyltransferase of Streptomyces hygroscopicus subsp. limoneus.